Here is a 250-residue protein sequence, read N- to C-terminus: Putative HTH-type transcriptional regulatory protein PAE1627 (250 aa).

One can recognise an HTH cro/C1-type domain in the interval leucine 129–lysine 183. The H-T-H motif DNA-binding region spans leucine 140 to arginine 159.

The polypeptide is Putative HTH-type transcriptional regulatory protein PAE1627 (Pyrobaculum aerophilum (strain ATCC 51768 / DSM 7523 / JCM 9630 / CIP 104966 / NBRC 100827 / IM2)).